The primary structure comprises 180 residues: Acireductone dioxygenase (180 aa).

Fe(2+)-binding residues include histidine 97, histidine 99, glutamate 103, and histidine 141. Residues histidine 97, histidine 99, glutamate 103, and histidine 141 each contribute to the Ni(2+) site.

It belongs to the acireductone dioxygenase (ARD) family. Monomer. Fe(2+) serves as cofactor. Requires Ni(2+) as cofactor.

The catalysed reaction is 1,2-dihydroxy-5-(methylsulfanyl)pent-1-en-3-one + O2 = 3-(methylsulfanyl)propanoate + CO + formate + 2 H(+). The enzyme catalyses 1,2-dihydroxy-5-(methylsulfanyl)pent-1-en-3-one + O2 = 4-methylsulfanyl-2-oxobutanoate + formate + 2 H(+). The protein operates within amino-acid biosynthesis; L-methionine biosynthesis via salvage pathway; L-methionine from S-methyl-5-thio-alpha-D-ribose 1-phosphate: step 5/6. Functionally, catalyzes 2 different reactions between oxygen and the acireductone 1,2-dihydroxy-3-keto-5-methylthiopentene (DHK-MTPene) depending upon the metal bound in the active site. Fe-containing acireductone dioxygenase (Fe-ARD) produces formate and 2-keto-4-methylthiobutyrate (KMTB), the alpha-ketoacid precursor of methionine in the methionine recycle pathway. Ni-containing acireductone dioxygenase (Ni-ARD) produces methylthiopropionate, carbon monoxide and formate, and does not lie on the methionine recycle pathway. In Acidiphilium cryptum (strain JF-5), this protein is Acireductone dioxygenase.